A 3023-amino-acid polypeptide reads, in one-letter code: Genome polyprotein (3023 aa).

Positions 1–21 are enriched in basic residues; the sequence is MSTLPKPKRQTKRNTLRRPKN. S2 is subject to N-acetylserine; by host. Positions 2-23 are interaction with STAT1; the sequence is STLPKPKRQTKRNTLRRPKNVK. Positions 2 to 58 are interaction with EIF2AK2/PKR; that stretch reads STLPKPKRQTKRNTLRRPKNVKFPAGGQIVGEVYVLPRRGPQLGVREVRKTSERSQP. An interaction with DDX3X region spans residues 2 to 59; it reads STLPKPKRQTKRNTLRRPKNVKFPAGGQIVGEVYVLPRRGPQLGVREVRKTSERSQPR. A disordered region spans residues 2-75; sequence STLPKPKRQT…PKARPREGRS (74 aa). At 2-168 the chain is on the cytoplasmic side; it reads STLPKPKRQT…EDGVNYATGN (167 aa). 2 consecutive short sequence motifs (nuclear localization signal) follow at residues 5–13 and 38–43; these read PKPKRQTKR and PRRGPQ. Over residues 47 to 57 the composition is skewed to basic and acidic residues; it reads REVRKTSERSQ. S53 bears the Phosphoserine; by host mark. 2 consecutive short sequence motifs (nuclear localization signal) follow at residues 58 to 64 and 66 to 71; these read PRGRRQP and PKARPR. The tract at residues 112-152 is important for endoplasmic reticulum and mitochondrial localization; the sequence is PRRRSRNLGKVIDTLTCGFADLMGYIPLIGAPVGGVARALA. Phosphoserine; by host is present on S116. Residues 122–173 are interaction with APOA2; the sequence is VIDTLTCGFADLMGYIPLIGAPVGGVARALAHGVRALEDGVNYATGNLPGCS. Positions 164-167 are important for lipid droplets localization; it reads YATG. Residues 169 to 189 form a helical membrane-spanning segment; it reads LPGCSFSIFLLALFSCLTCPA. Residues 178–191 constitute a propeptide, ER anchor for the core protein, removed in mature form by host signal peptidase; that stretch reads LLALFSCLTCPASS. The Lumenal portion of the chain corresponds to 190–359; it reads SSLEYRNASG…VGAHWGVMAG (170 aa). N-linked (GlcNAc...) asparagine; by host glycosylation is found at N196, N209, and N235. The interval 266-297 is important for fusion; it reads LVAPPTLCSALYVEDAFGAVSLVGQAFTFRPR. Residue N306 is glycosylated (N-linked (GlcNAc...) asparagine; by host). The chain crosses the membrane as a helical span at residues 360-380; the sequence is LAYFSMQGNWAKVVIVLIMFS. Residues 381–733 are Lumenal-facing; the sequence is GVDATTHTTG…WEFVVLVFLL (353 aa). Positions 386–413 are HVR1; that stretch reads THTTGGSAAQATAGFTSFFTRGPSQNLQ. N-linked (GlcNAc...) (high mannose) asparagine; by host glycans are attached at residues N418, N424, and N431. 4 cysteine pairs are disulfide-bonded: C430–C554, C453–C460, C488–C496, and C505–C510. An N-linked (GlcNAc...) asparagine; by host glycan is attached at N449. Positions 476–480 are HVR2; it reads ANING. A glycan (N-linked (GlcNAc...) asparagine; by host) is linked at N477. The interval 482 to 495 is CD81-binding 1; that stretch reads SEDRPYCWHYPPRP. N534 carries an N-linked (GlcNAc...) asparagine; by host glycan. Residues 546–553 are CD81-binding 2; it reads PPQGRWFG. The N-linked (GlcNAc...) asparagine; by host glycan is linked to N558. 4 disulfides stabilise this stretch: C566–C571, C589–C593, C605–C628, and C615–C652. N631 and N653 each carry an N-linked (GlcNAc...) (high mannose) asparagine; by host glycan. A disulfide bridge links C660 with C685. The segment at 668–679 is PKR/eIF2-alpha phosphorylation homology domain (PePHD); the sequence is SEQQPLLHSTTD. The chain crosses the membrane as a helical span at residues 734–754; it reads LADARVCVALWMMLLISQAEA. Residues 755 to 765 are Lumenal-facing; it reads AMENLVMLNAL. Residues 766–786 form a helical membrane-spanning segment; the sequence is SAAGQQGYVWYLVAFCAAWHI. Residues 787–790 lie on the Cytoplasmic side of the membrane; sequence RGKL. Residues 791 to 811 traverse the membrane as a helical segment; sequence VPLITYGLTGLWPLALLDLLL. Over 812 to 821 the chain is Lumenal; sequence PQRAYAWTGE. A helical transmembrane segment spans residues 822 to 842; sequence DDATIGAGVLLLLGFFTLSPW. Topologically, residues 843 to 889 are cytoplasmic; sequence YKHWIGRLIWWNQYAICRGEAALQVWVPPLLVRGSRDSVILLASLLY. A helical membrane pass occupies residues 890–910; the sequence is PSLIFDITKLLIAVLGPLYLI. The 128-residue stretch at 907 to 1034 folds into the Peptidase C18 domain; that stretch reads LYLIQAALTS…DYKKMGWRLL (128 aa). The Lumenal segment spans residues 911–936; it reads QAALTSTPYFVRAHVLIRICMLVRSA. The interval 912 to 1214 is protease NS2-3; sequence AALTSTPYFV…PVETLSTQVR (303 aa). C930 carries the S-palmitoyl cysteine; by host lipid modification. The chain crosses the membrane as a helical span at residues 937–957; sequence MGGKYVQMAVLTVGRWFNTYL. The tract at residues 937 to 957 is interaction with host SCPS1; sequence MGGKYVQMAVLTVGRWFNTYL. Topologically, residues 958–1665 are cytoplasmic; the sequence is YDHLSPIQDW…CMSADLEVTT (708 aa). Active-site for protease NS2 activity; shared with dimeric partner residues include H960, E980, and C1001. The 182-residue stretch at 1035–1216 folds into the Peptidase S29 domain; the sequence is SPISAYAQQT…ETLSTQVRSP (182 aa). Residues H1091 and D1115 each act as charge relay system; for serine protease NS3 activity in the active site. Residues C1131 and C1133 each coordinate Zn(2+). S1173 functions as the Charge relay system; for serine protease NS3 activity in the catalytic mechanism. Zn(2+) is bound by residues C1179 and H1183. Positions 1225 to 1377 constitute a Helicase ATP-binding domain; it reads PAVPESYQVG…PNIEEVGLTS (153 aa). 1238 to 1245 is an ATP binding site; it reads APTGSGKS. Mg(2+) is bound by residues S1245 and E1325. The DECH box motif lies at 1324 to 1327; that stretch reads DECH. Residues 1387-1546 form the Helicase C-terminal domain; sequence ALPLAMIKGG…DLQPAETTVR (160 aa). Residues 1494-1506 form an RNA-binding region; it reads QRRGRTGRGRPGI. Residues 1666–1686 form a helical membrane-spanning segment; sequence SAWVLVGGVLAALAAYCLSVG. Positions 1687 to 1698 are NS3-binding; it reads CVVIVGHIELGG. The Cytoplasmic portion of the chain corresponds to 1687–1813; sequence CVVIVGHIEL…SVTSPLTTNQ (127 aa). The chain crosses the membrane as a helical span at residues 1814 to 1834; it reads TMFFNILGGWVATHLAGPAAS. The Lumenal segment spans residues 1835 to 1836; it reads SA. A helical transmembrane segment spans residues 1837–1857; it reads FVVSGLAGAAVGGIGIGRVLL. Residue D1858 is a topological domain, cytoplasmic. Residues 1859–1879 form a helical membrane-spanning segment; the sequence is VLAGYGAGVSGALVAFKIMGG. The Lumenal portion of the chain corresponds to 1880-1889; the sequence is ELPTTEDMVN. A helical transmembrane segment spans residues 1890–1910; that stretch reads LLPAILSPGALVVGVICAAVL. The Cytoplasmic segment spans residues 1911–1980; the sequence is RRHVGPGEGA…WINEDYPSPC (70 aa). C1980 is lipidated: S-palmitoyl cysteine; by host. The stretch at 1981–2010 is an intramembrane region; sequence NGDWLHDIWDWVCIVLSDFKTWLSAKIMPK. Residues 2011–3002 are Cytoplasmic-facing; it reads VPGIPFLSCQ…YHSVSRARTR (992 aa). Zn(2+)-binding residues include C2019, C2037, C2039, and C2060. An FKBP8-binding region spans residues 2128 to 2216; sequence EFFTELDGVR…ASSSASQLSA (89 aa). The segment at 2128 to 2340 is transcriptional activation; that stretch reads EFFTELDGVR…PVPPPRRKRT (213 aa). Residues 2143–2147 form an interaction with non-structural protein 4A region; the sequence is PPCKP. Residues 2195 to 2218 are compositionally biased toward low complexity; the sequence is ARRLARGSPPSEASSSASQLSAPS. The tract at residues 2195–2226 is disordered; sequence ARRLARGSPPSEASSSASQLSAPSLKATCQTH. The interval 2197–2450 is interaction with host SKP2; sequence RLARGSPPSE…AIITPCSAEE (254 aa). A phosphoserine; by host mark is found at S2202, S2205, S2209, S2212, S2215, and S2218. The tract at residues 2218–2257 is ISDR; the sequence is SLKATCQTHRPHPDAELIDANLLWRQEMGSNITRVESETK. The tract at residues 2218-2283 is interaction with EIF2AK2/PKR; that stretch reads SLKATCQTHR…TELSIPAECF (66 aa). The NS4B-binding stretch occupies residues 2257-2314; it reads KVVILDSFEPLRAEEDDTELSIPAECFKKPPKYPPALPIWARPDYNPPLLPSWKDPTY. The tract at residues 2307 to 2385 is V3; it reads PSWKDPTYEP…GTESTAESGD (79 aa). 2 disordered regions span residues 2320–2344 and 2357–2422; these read HGCA…IKLD and ERSF…STVS. An SH3-binding motif is present at residues 2330–2333; that stretch reads APVP. The Nuclear localization signal signature appears at 2335–2343; that stretch reads PRRKRTIKL. The span at 2366-2384 shows a compositional bias: low complexity; it reads EGTGTSSSGVGTESTAESG. A phosphoserine; by host mark is found at S2461 and S2474. The region spanning 2646-2764 is the RdRp catalytic domain; sequence PLGFSYDTRC…ISESCGVEED (119 aa). The Mg(2+) site is built by D2652, D2750, and D2751. A helical transmembrane segment spans residues 3003–3023; it reads HLLLCLLLLTVGVGIFLLPAR.

It belongs to the hepacivirus polyprotein family. Homooligomer. Interacts with E1 (via C-terminus). Interacts with the non-structural protein 5A. Interacts (via N-terminus) with host STAT1 (via SH2 domain); this interaction results in decreased STAT1 phosphorylation and ubiquitin-mediated proteasome-dependent STAT1 degradation, leading to decreased IFN-stimulated gene transcription. Interacts with host STAT3; this interaction constitutively activates STAT3. Interacts with host LTBR receptor. Interacts with host TNFRSF1A receptor and possibly induces apoptosis. Interacts with host HNRPK. Interacts with host YWHAE. Interacts with host UBE3A/E6AP. Interacts with host DDX3X. Interacts with host APOA2. Interacts with host RXRA protein. Interacts with host SP110 isoform 3/Sp110b; this interaction sequesters the transcriptional corepressor SP110 away from the nucleus. Interacts with host CREB3 nuclear transcription protein; this interaction triggers cell transformation. Interacts with host ACY3. Interacts with host C1QR1. Interacts with host RBM24; this interaction, which enhances the interaction of the mature core protein with 5'-UTR, may inhibit viral translation and favor replication. Interacts with host EIF2AK2/PKR; this interaction induces the autophosphorylation of EIF2AK2. Part of the viral assembly initiation complex composed of NS2, E1, E2, NS3, NS4A, NS5A and the mature core protein. In terms of assembly, forms a heterodimer with envelope glycoprotein E2. Interacts with mature core protein. Interacts with protease NS2. The heterodimer E1/E2 interacts with host CLDN1; this interaction plays a role in viral entry into host cell. Interacts with host SPSB2 (via C-terminus). Part of the viral assembly initiation complex composed of NS2, E1, E2, NS3, NS4A, NS5A and the mature core protein. Interacts with host NEURL3; this interaction prevents E1 binding to glycoprotein E2. As to quaternary structure, forms a heterodimer with envelope glycoprotein E1. Interacts with host CD81 and SCARB1 receptors; these interactions play a role in viral entry into host cell. Interacts with host EIF2AK2/PKR; this interaction inhibits EIF2AK2 and probably allows the virus to evade the innate immune response. Interacts with host CD209/DC-SIGN and CLEC4M/DC-SIGNR. Interact with host SPCS1; this interaction is essential for viral particle assembly. Interacts with protease NS2. The heterodimer E1/E2 interacts with host CLDN1; this interaction plays a role in viral entry into host cell. Part of the viral assembly initiation complex composed of NS2, E1, E2, NS3, NS4A, NS5A and the mature core protein. Interacts with host SLC3A2/4F2hc; the interaction may facilitate viral entry into host cell. Interacts with human PLSCR1. Homohexamer. Homoheptamer. Interacts with protease NS2. In terms of assembly, homodimer. Interacts with host SPCS1; this interaction is essential for viral particle assembly. Interacts with envelope glycoprotein E1. Interacts with envelope glycoprotein E2. Interacts with viroporin p7. Interacts with serine protease/helicase NS3. Part of the replication complex composed of NS2, NS3, NS4A, NS4B, NS5A and the RNA-directed RNA polymerase embedded in an ER-derived membranous web. Part of the viral assembly initiation complex composed of NS2, E1, E2, NS3, NS4A, NS5A and the mature core protein. As to quaternary structure, interacts with protease NS2. Interacts with non-structural protein 4A; this interaction stabilizes the folding of NS3 serine protease. NS3-NS4A interaction is essential for NS3 activation and allows membrane anchorage of the latter. NS3/NS4A complex also prevents phosphorylation of host IRF3, thus preventing the establishment of dsRNA induced antiviral state. Interacts with host MAVS; this interaction leads to the cleavage and inhibition of host MAVS. Interacts with host TICAM1; this interaction leads to the cleavage and inhibition of host TICAM1. Interacts with host TANK-binding kinase/TBK1; this interaction results in the inhibition of the association between TBK1 and IRF3, which leads to the inhibition of IRF3 activation. Interacts with host RBM24. Part of the replication complex composed of NS2, NS3, NS4A, NS4B, NS5A and the RNA-directed RNA polymerase embedded in an ER-derived membranous web. Part of the viral assembly initiation complex composed of NS2, E1, E2, NS3, NS4A, NS5A and the mature core protein. Interacts with NS3 serine protease; this interaction stabilizes the folding of NS3 serine protease. NS3-NS4A interaction is essential for NS3 activation and allows membrane anchorage of the latter. Interacts with non-structural protein 5A (via N-terminus). Part of the replication complex composed of NS2, NS3, NS4A, NS4B, NS5A and the RNA-directed RNA polymerase embedded in an ER-derived membranous web. Part of the viral assembly initiation complex composed of NS2, E1, E2, NS3, NS4A, NS5A and the mature core protein. In terms of assembly, homomultimer. Interacts with non-structural protein NS5A. Interacts with host PLA2G4C; this interaction likely initiates the recruitment of replication complexes to lipid droplets. Interacts with host STING; this interaction disrupts the interaction between STING and TBK1 thereby suppressing the interferon signaling. Part of the replication complex composed of NS2, NS3, NS4A, NS4B, NS5A and the RNA-directed RNA polymerase embedded in an ER-derived membranous web. As to quaternary structure, monomer. Homodimer; dimerization is required for RNA-binding. Interacts with the mature core protein. Interacts (via N-terminus) with non-structural protein 4A. Interacts with non-structural protein 4B. Interacts (via region D2) with RNA-directed RNA polymerase. Part of the viral assembly initiation complex composed of NS2, E1, E2, NS3, NS4A, NS5A and the mature core protein. Part of the replication complex composed of NS2, NS3, NS4A, NS4B, NS5A and the RNA-directed RNA polymerase embedded in an ER-derived membranous web. Interacts with host GRB2. Interacts with host BIN1. Interacts with host PIK3R1. Interacts with host SRCAP. Interacts with host FKBP8. Interacts (via C-terminus) with host VAPB (via MSP domain). Interacts with host EIF2AK2/PKR; this interaction leads to disruption of EIF2AK2 dimerization by NS5A and probably allows the virus to evade the innate immune response. Interacts (via N-terminus) with host PACSIN2 (via N-terminus); this interaction attenuates protein kinase C alpha-mediated phosphorylation of PACSIN2 by disrupting the interaction between PACSIN2 and PRKCA. Interacts (via N-terminus) with host SRC kinase (via SH2 domain). Interacts with most Src-family kinases. Interacts with host IFI27 and SKP2; promotes the ubiquitin-mediated proteasomal degradation of NS5A. Interacts with host GPS2. Interacts with host TNFRSF21; this interaction allows the modulation by the virus of JNK, p38 MAPK, STAT3, and Akt signaling pathways in a DR6-dependent manner. Interacts (via N-terminus) with host CIDEB (via N-terminus); this interaction seems to regulate the association of HCV particles with APOE. Interacts with host CHKA/Choline Kinase-alpha; CHKA bridges host PI4KA and NS5A and potentiates NS5A-stimulated PI4KA activity, which then facilitates the targeting of the ternary complex to the ER for viral replication. Interacts with host SPSB2 (via C-terminus); this interaction targets NS5A for ubiquitination and degradation. Interacts with host RAB18; this interaction may promote the association of NS5A and other replicase components with lipid droplets. Interacts (via region D2) with host PPIA/CYPA; the interaction stimulates RNA-binding ability of NS5A and is dependent on the peptidyl-prolyl cis-trans isomerase activity of PPIA/CYPA. Interacts with host TRIM14; this interaction induces the degradation of NS5A. Homooligomer. Interacts with non-structural protein 5A. Interacts with host VAPB. Interacts with host PRK2/PKN2. Interacts with host HNRNPA1 and SEPT6; these interactions facilitate viral replication. Part of the replication complex composed of NS2, NS3, NS4A, NS4B, NS5A and the RNA-directed RNA polymerase. Zn(2+) serves as cofactor. The cofactor is Mg(2+). Post-translationally, specific enzymatic cleavages in vivo yield mature proteins. The structural proteins, core, E1, E2 and p7 are produced by proteolytic processing by host signal peptidases. The core protein precursor is synthesized as a 23 kDa, which is retained in the ER membrane through the hydrophobic signal peptide. Cleavage by the signal peptidase releases the 21 kDa mature core protein. The cleavage of the core protein precursor occurs between aminoacids 176 and 188 but the exact cleavage site is not known. Some degraded forms of the core protein appear as well during the course of infection. The other proteins (p7, NS2, NS3, NS4A, NS4B, NS5A and NS5B) are cleaved by the viral proteases. Autoprocessing between NS2 and NS3 is mediated by the NS2 cysteine protease catalytic domain and regulated by the NS3 N-terminal domain. In terms of processing, phosphorylated by host PKC and PKA. Ubiquitinated; mediated by UBE3A and leading to core protein subsequent proteasomal degradation. Post-translationally, highly N-glycosylated. In terms of processing, palmitoylation is required for NS2/3 autoprocessing and E2 recruitment to membranes. Palmitoylated. This modification may play a role in its polymerization or in protein-protein interactions. Post-translationally, phosphorylated on serines in a basal form termed p56. p58 is a hyperphosphorylated form of p56. p56 and p58 coexist in the cell in roughly equivalent amounts. Hyperphosphorylation is dependent on the presence of NS4A. Host CSNK1A1/CKI-alpha or RPS6KB1 kinases may be responsible for NS5A phosphorylation. In terms of processing, tyrosine phosphorylation is essential for the interaction with host SRC. The N-terminus is phosphorylated by host PRK2/PKN2.

The protein localises to the host endoplasmic reticulum membrane. Its subcellular location is the host mitochondrion membrane. It localises to the virion. It is found in the host cytoplasm. The protein resides in the host nucleus. The protein localises to the host lipid droplet. Its subcellular location is the virion membrane. It localises to the host mitochondrion. It is found in the host cell membrane. The protein resides in the host perinuclear region. The catalysed reaction is Hydrolysis of four peptide bonds in the viral precursor polyprotein, commonly with Asp or Glu in the P6 position, Cys or Thr in P1 and Ser or Ala in P1'.. It catalyses the reaction a ribonucleoside 5'-triphosphate + H2O = a ribonucleoside 5'-diphosphate + phosphate + H(+). It carries out the reaction ATP + H2O = ADP + phosphate + H(+). The enzyme catalyses RNA(n) + a ribonucleoside 5'-triphosphate = RNA(n+1) + diphosphate. With respect to regulation, inhibited by the antiviral drug hexamethylene amiloride. Inhibition by amantadine appears to be genotype-dependent. Also inhibited by long-alkyl-chain iminosugar derivatives. Activity is up-regulated by PRK2/PKN2-mediated phosphorylation. Functionally, packages viral RNA to form a viral nucleocapsid, and promotes virion budding. Participates in the viral particle production as a result of its interaction with the non-structural protein 5A. Binds RNA and may function as a RNA chaperone to induce the RNA structural rearrangements taking place during virus replication. Modulates viral translation initiation by interacting with viral IRES and 40S ribosomal subunit. Affects various cell signaling pathways, host immunity and lipid metabolism. Prevents the establishment of cellular antiviral state by blocking the interferon-alpha/beta (IFN-alpha/beta) and IFN-gamma signaling pathways and by blocking the formation of phosphorylated STAT1 and promoting ubiquitin-mediated proteasome-dependent degradation of STAT1. Activates STAT3 leading to cellular transformation. Regulates the activity of cellular genes, including c-myc and c-fos. May repress the promoter of p53, and sequester CREB3 and SP110 isoform 3/Sp110b in the cytoplasm. Represses cell cycle negative regulating factor CDKN1A, thereby interrupting an important check point of normal cell cycle regulation. Targets transcription factors involved in the regulation of inflammatory responses and in the immune response: suppresses TNF-induced NF-kappa-B activation, and activates AP-1. Binds to dendritic cells (DCs) via C1QR1, resulting in down-regulation of T-lymphocytes proliferation. Alters lipid metabolism by interacting with hepatocellular proteins involved in lipid accumulation and storage. Induces up-regulation of FAS promoter activity, and thereby contributes to the increased triglyceride accumulation in hepatocytes (steatosis). Forms a heterodimer with envelope glycoprotein E2, which mediates virus attachment to the host cell, virion internalization through clathrin-dependent endocytosis and fusion with host membrane. Fusion with the host cell is most likely mediated by both E1 and E2, through conformational rearrangements of the heterodimer required for fusion rather than a classical class II fusion mechanism. E1/E2 heterodimer binds host apolipoproteins such as APOB and ApoE thereby forming a lipo-viro-particle (LVP). APOE associated to the LVP allows the initial virus attachment to cell surface receptors such as the heparan sulfate proteoglycans (HSPGs), syndecan-1 (SDC1), syndecan-1 (SDC2), the low-density lipoprotein receptor (LDLR) and scavenger receptor class B type I (SCARB1). The cholesterol transfer activity of SCARB1 allows E2 exposure and binding of E2 to SCARB1 and the tetraspanin CD81. E1/E2 heterodimer binding on CD81 activates the epithelial growth factor receptor (EGFR) signaling pathway. Diffusion of the complex E1-E2-EGFR-SCARB1-CD81 to the cell lateral membrane allows further interaction with Claudin 1 (CLDN1) and occludin (OCLN) to finally trigger HCV entry. Its function is as follows. Forms a heterodimer with envelope glycoprotein E1, which mediates virus attachment to the host cell, virion internalization through clathrin-dependent endocytosis and fusion with host membrane. Fusion with the host cell is most likely mediated by both E1 and E2, through conformational rearrangements of the heterodimer required for fusion rather than a classical class II fusion mechanism. The interaction between envelope glycoprotein E2 and host apolipoprotein E/APOE allows the proper assembly, maturation and infectivity of the viral particles. This interaction is probably promoted via the up-regulation of cellular autophagy by the virus. E1/E2 heterodimer binds host apolipoproteins such as APOB and APOE thereby forming a lipo-viro-particle (LVP). APOE associated to the LVP allows the initial virus attachment to cell surface receptors such as the heparan sulfate proteoglycans (HSPGs), syndecan-1 (SDC1), syndecan-1 (SDC2), the low-density lipoprotein receptor (LDLR) and scavenger receptor class B type I (SCARB1). The cholesterol transfer activity of SCARB1 allows E2 exposure and binding of E2 to SCARB1 and the tetraspanin CD81. E1/E2 heterodimer binding on CD81 activates the epithelial growth factor receptor (EGFR) signaling pathway. Diffusion of the complex E1-E2-EGFR-SCARB1-CD81 to the cell lateral membrane allows further interaction with Claudin 1 (CLDN1) and occludin (OCLN) to finally trigger HCV entry. Inhibits host EIF2AK2/PKR activation, preventing the establishment of an antiviral state. Viral ligand for CD209/DC-SIGN and CLEC4M/DC-SIGNR, which are respectively found on dendritic cells (DCs), and on liver sinusoidal endothelial cells and macrophage-like cells of lymph node sinuses. These interactions allow the capture of circulating HCV particles by these cells and subsequent facilitated transmission to permissive cells such as hepatocytes and lymphocyte subpopulations. The interaction between E2 and host amino acid transporter complex formed by SLC3A2 and SLC7A5/LAT1 may facilitate viral entry into host cell. In terms of biological role, ion channel protein that acts as a viroporin and plays an essential role in the assembly, envelopment and secretion of viral particles. Regulates the host cell secretory pathway, which induces the intracellular retention of viral glycoproteins and favors assembly of viral particles. Creates a pore in acidic organelles and releases Ca(2+) and H(+) in the cytoplasm of infected cells, leading to a productive viral infection. High levels of cytoplasmic Ca(2+) may trigger membrane trafficking and transport of viral ER-associated proteins to viroplasms, sites of viral genome replication. This ionic imbalance induces the assembly of the inflammasome complex, which triggers the maturation of pro-IL-1beta into IL-1beta through the action of caspase-1. Targets also host mitochondria and induces mitochondrial depolarization. In addition of its role as a viroporin, acts as a lipid raft adhesion factor. Functionally, cysteine protease required for the proteolytic auto-cleavage between the non-structural proteins NS2 and NS3. The N-terminus of NS3 is required for the function of NS2 protease (active region NS2-3). Promotes the initiation of viral particle assembly by mediating the interaction between structural and non-structural proteins. Displays three enzymatic activities: serine protease with a chymotrypsin-like fold, NTPase and RNA helicase. NS3 serine protease, in association with NS4A, is responsible for the cleavages of NS3-NS4A, NS4A-NS4B, NS4B-NS5A and NS5A-NS5B. The NS3/NS4A complex prevents phosphorylation of host IRF3, thus preventing the establishment of dsRNA induced antiviral state. The NS3/NS4A complex induces host amino acid transporter component SLC3A2, thus contributing to HCV propagation. NS3 RNA helicase binds to RNA and unwinds both dsDNA and dsRNA in the 3' to 5' direction, and likely resolves RNA complicated stable secondary structures in the template strand. Binds a single ATP and catalyzes the unzipping of a single base pair of dsRNA. Inhibits host antiviral proteins TBK1 and IRF3 thereby preventing the establishment of an antiviral state. Cleaves host MAVS/CARDIF thereby preventing the establishment of an antiviral state. Cleaves host TICAM1/TRIF, thereby disrupting TLR3 signaling and preventing the establishment of an antiviral state. Its function is as follows. Peptide cofactor which forms a non-covalent complex with the N-terminal of NS3 serine protease. The NS3/NS4A complex prevents phosphorylation of host IRF3, thus preventing the establishment of dsRNA induced antiviral state. The NS3/NS4A complex induces host amino acid transporter component SLC3A2, thus contributing to HCV propagation. In terms of biological role, induces a specific membrane alteration that serves as a scaffold for the virus replication complex. This membrane alteration gives rise to the so-called ER-derived membranous web that contains the replication complex. NS4B self-interaction contributes to its function in membranous web formation. Promotes host TRIF protein degradation in a CASP8-dependent manner thereby inhibiting host TLR3-mediated interferon signaling. Disrupts the interaction between STING and TBK1 contributing to the inhibition of interferon signaling. Functionally, phosphorylated protein that is indispensable for viral replication and assembly. Both hypo- and hyperphosphorylated states are required for the viral life cycle. The hyperphosphorylated form of NS5A is an inhibitor of viral replication. Involved in RNA-binding and especially in binding to the viral genome. Zinc is essential for RNA-binding. Participates in the viral particle production as a result of its interaction with the mature viral core protein. Its interaction with host VAPB may target the viral replication complex to vesicles. Down-regulates viral IRES translation initiation. Mediates interferon resistance, presumably by interacting with and inhibiting host EIF2AK2/PKR. Prevents BIN1-induced apoptosis. Acts as a transcriptional activator of some host genes important for viral replication when localized in the nucleus. Via the interaction with host PACSIN2, modulates lipid droplet formation in order to promote virion assembly. Modulates TNFRSF21/DR6 signaling pathway for viral propagation. RNA-dependent RNA polymerase that performs primer-template recognition and RNA synthesis during viral replication. Initiates RNA transcription/replication at a flavin adenine dinucleotide (FAD), resulting in a 5'- FAD cap on viral RNAs. In this way, recognition of viral 5' RNA by host pattern recognition receptors can be bypassed, thereby evading activation of antiviral pathways. The sequence is that of Genome polyprotein from Homo sapiens (Human).